The primary structure comprises 166 residues: Olee1-like protein (166 aa).

Residues 1–23 (MAKSIIIQAPALCFLSLLGFAYS) form the signal peptide. 3 cysteine pairs are disulfide-bonded: C35–C106, C38–C150, and C59–C94.

Belongs to the Ole e I family.

It localises to the secreted. This Betula pendula (European white birch) protein is Olee1-like protein.